A 499-amino-acid polypeptide reads, in one-letter code: Diacylglycerol kinase 1 (499 aa).

In terms of domain architecture, DAGKc spans 41–194 (APCCPVVVFI…IDSWHIIMRM (154 aa)). Residues 442-479 (PCKSKSVNDPSSPMCCSNHDDDERNSLEDEDEWEEGRK) form a disordered region. The segment covering 446 to 456 (KSVNDPSSPMC) has biased composition (polar residues). Residues 459–468 (NHDDDERNSL) show a composition bias toward basic and acidic residues.

The protein belongs to the eukaryotic diacylglycerol kinase family. As to quaternary structure, monomer. Highly expressed in roots.

The catalysed reaction is a 1,2-diacyl-sn-glycerol + ATP = a 1,2-diacyl-sn-glycero-3-phosphate + ADP + H(+). Phosphorylates the second messenger diacylglycerol (DAG) to generate phosphatidic acid (PA), another important signaling molecule. PA is required for plant development and responses to abiotic stress. May play a role in disease resistance responses to pathogen attack. Modulates root architecture by regulating the ratio of DAG and PA, which have opposite effect on the promotion or suppression of lateral roots vs seminal roots. Suppresses lateral root number, but promotes seminal root and crown root thickness. This Oryza sativa subsp. japonica (Rice) protein is Diacylglycerol kinase 1.